The following is a 487-amino-acid chain: 2-aminomuconic semialdehyde dehydrogenase (487 aa).

231–236 contacts NAD(+); the sequence is GSQPTA. The active-site Proton acceptor is Glu-253. Cys-287 serves as the catalytic Nucleophile.

This sequence belongs to the aldehyde dehydrogenase family.

It localises to the cytoplasm. It catalyses the reaction 2-aminomuconate 6-semialdehyde + NAD(+) + H2O = (2Z,4E)-2-aminomuconate + NADH + 2 H(+). Its pathway is amino-acid degradation; L-kynurenine degradation. Its function is as follows. Catalyzes the NAD-dependent oxidation of 2-aminomuconic semialdehyde of the kynurenine metabolic pathway in L-tryptophan degradation. The protein is 2-aminomuconic semialdehyde dehydrogenase (ALDH8A1) of Bos taurus (Bovine).